The sequence spans 183 residues: Ankyrin repeat domain-containing protein 39 (183 aa).

ANK repeat units follow at residues 30-59 (DFER…DPSQ), 63-92 (AGYT…KCDA), 96-125 (GGAT…NPRV), and 129-158 (DGMT…ALKA). Residue serine 153 is modified to Phosphoserine.

It belongs to the ANKRD39 family.

This is Ankyrin repeat domain-containing protein 39 (ANKRD39) from Homo sapiens (Human).